We begin with the raw amino-acid sequence, 257 residues long: Type III pantothenate kinase (257 aa).

Residue 6-13 (DSGNTNTV) participates in ATP binding. 108–111 (GADR) contacts substrate. The active-site Proton acceptor is the aspartate 110. Aspartate 130 serves as a coordination point for K(+). Residue threonine 133 coordinates ATP. A substrate-binding site is contributed by threonine 185.

The protein belongs to the type III pantothenate kinase family. As to quaternary structure, homodimer. NH4(+) is required as a cofactor. The cofactor is K(+).

It is found in the cytoplasm. It catalyses the reaction (R)-pantothenate + ATP = (R)-4'-phosphopantothenate + ADP + H(+). The protein operates within cofactor biosynthesis; coenzyme A biosynthesis; CoA from (R)-pantothenate: step 1/5. In terms of biological role, catalyzes the phosphorylation of pantothenate (Pan), the first step in CoA biosynthesis. This Rhodospirillum rubrum (strain ATCC 11170 / ATH 1.1.1 / DSM 467 / LMG 4362 / NCIMB 8255 / S1) protein is Type III pantothenate kinase.